The chain runs to 82 residues: Musculoskeletal embryonic nuclear protein 1 (82 aa).

Disordered stretches follow at residues 1-33 (MSQAGAQEAPIKKKRPPVKDEDLKGARGNLTKN) and 49-82 (QAGSAAPSVFSRTRTGTETVFEKPKAGPTKSVFG). Ser2 is modified (phosphoserine). A Nuclear localization signal motif is present at residues 10–18 (PIKKKRPPV).

It belongs to the MUSTN1 family. As to expression, expression in skeletal muscle is reduced during limb unloading but increases during the active recovery phase that follows.

The protein resides in the nucleus. The protein localises to the cytoplasm. Its subcellular location is the secreted. It localises to the extracellular space. In terms of biological role, required for chondrocyte development and proliferation. Plays a role in myoblast differentiation and fusion. Modulates skeletal muscle extracellular matrix composition. Plays a role in skeletal muscle function. Plays a role in glucose homeostasis. The sequence is that of Musculoskeletal embryonic nuclear protein 1 (MUSTN1) from Homo sapiens (Human).